Consider the following 350-residue polypeptide: Quinone oxidoreductase-like protein 2 (350 aa).

Lysine 36 carries the post-translational modification N6-acetyllysine. Position 201 is an N6-succinyllysine (lysine 201). 2 positions are modified to N6-acetyllysine: lysine 302 and lysine 328.

This sequence belongs to the zinc-containing alcohol dehydrogenase family. Quinone oxidoreductase subfamily.

The protein is Quinone oxidoreductase-like protein 2 of Rattus norvegicus (Rat).